The primary structure comprises 162 residues: Protein-export protein SecB 2 (162 aa).

This sequence belongs to the SecB family. In terms of assembly, homotetramer, a dimer of dimers. One homotetramer interacts with 1 SecA dimer.

The protein localises to the cytoplasm. One of the proteins required for the normal export of preproteins out of the cell cytoplasm. It is a molecular chaperone that binds to a subset of precursor proteins, maintaining them in a translocation-competent state. It also specifically binds to its receptor SecA. The protein is Protein-export protein SecB 2 of Polaromonas naphthalenivorans (strain CJ2).